The sequence spans 316 residues: Protein lifeguard 2 (316 aa).

The interval 1 to 53 is disordered; it reads MTQGKLSVANKAPGTEGQQQVHGEKKEAPAVPSAPPSYEEATSGEGMKAGAFP. A run of 3 helical transmembrane segments spans residues 106 to 126, 138 to 158, and 165 to 185; these read VYTI…LFTF, PGWY…LACC, and FPWN…LTGM. Residue N191 is glycosylated (N-linked (GlcNAc...) asparagine). Helical transmembrane passes span 194–214, 225–245, 250–270, and 290–310; these read SVLL…VFSF, GVLF…AILL, VPWL…LFLA, and IFGA…FLQL.

Belongs to the BI1 family. LFG subfamily. In terms of assembly, interacts with FAS/TNFRSF6 and BAX. In terms of tissue distribution, highly expressed in breast carcinoma tissues. Enhanced expression correlates with the grade of the tumor (grade II/grade III) in primary breast tumors (at protein level). Widely expressed. Expressed at high levels in the brain especially in the hippocampus.

The protein resides in the cell membrane. It is found in the membrane raft. The protein localises to the postsynaptic cell membrane. Functionally, antiapoptotic protein which protects cells uniquely from Fas-induced apoptosis. Regulates Fas-mediated apoptosis in neurons by interfering with caspase-8 activation. May play a role in cerebellar development by affecting cerebellar size, internal granular layer (IGL) thickness, and Purkinje cell (PC) development. This Homo sapiens (Human) protein is Protein lifeguard 2 (FAIM2).